We begin with the raw amino-acid sequence, 470 residues long: 3-isopropylmalate dehydratase large subunit (470 aa).

Residues Cys-347, Cys-407, and Cys-410 each contribute to the [4Fe-4S] cluster site.

This sequence belongs to the aconitase/IPM isomerase family. LeuC type 1 subfamily. In terms of assembly, heterodimer of LeuC and LeuD. It depends on [4Fe-4S] cluster as a cofactor.

It carries out the reaction (2R,3S)-3-isopropylmalate = (2S)-2-isopropylmalate. The protein operates within amino-acid biosynthesis; L-leucine biosynthesis; L-leucine from 3-methyl-2-oxobutanoate: step 2/4. Its function is as follows. Catalyzes the isomerization between 2-isopropylmalate and 3-isopropylmalate, via the formation of 2-isopropylmaleate. This is 3-isopropylmalate dehydratase large subunit from Shewanella amazonensis (strain ATCC BAA-1098 / SB2B).